The sequence spans 329 residues: 2-oxoglutarate-dependent dioxygenase htyE (329 aa).

In terms of domain architecture, Fe2OG dioxygenase spans 175–289 (NTSELRLLHY…RYSVAYFGKP (115 aa)). Residues histidine 201, aspartate 203, and histidine 261 each coordinate Fe cation. Arginine 280 contributes to the 2-oxoglutarate binding site.

Belongs to the iron/ascorbate-dependent oxidoreductase family. Requires Fe(2+) as cofactor.

It functions in the pathway antifungal biosynthesis. In terms of biological role, 2-oxoglutarate-dependent dioxygenase; part of the gene cluster that mediates the de novo generation of L-homotyrosine from acetyl-CoA and 4-hydroxyphenyl-pyruvate. L-homotyrosine is a building block of echinocandin B, a fungal lipidated cyclic hexapeptide that acts as an antifungal agent. L-homotyrosine 4-hydroxyphenyl-pyruvate first undergoes an aldol-type condensation by htyA with the C-2 of acetyl-CoA followed by the release of CoA to form 2-(4-hydroxybenzyl)-malate. This is followed by isomerization of 2-(4-hydroxy-benzyl)-malate to 3-(4-hydroxybenzyl)-malate by htyD. Thereafter, 3-(4-hydroxybenzyl)-malate undergoes decarboxylation and oxidation to form 2-oxo-4-(4-hydroxybenzyl)butanoic acid, coupled to reduction of NAD(+) to NADH by htyC. The product then undergoes transamination catalyzed by htyB to form L-homotyrosine. This is 2-oxoglutarate-dependent dioxygenase htyE from Aspergillus rugulosus (Emericella rugulosa).